Consider the following 64-residue polypeptide: Conotoxin reg3k (64 aa).

A signal peptide spans 1–20 (MMFKLGVLLTICLLLFPLTA). A propeptide spanning residues 21–48 (LQLDWDQPGDHMLDISSEIDDRWFDPVR) is cleaved from the precursor. Intrachain disulfides connect cysteine 50/cysteine 60, cysteine 51/cysteine 58, and cysteine 56/cysteine 61. Proline 59 carries the post-translational modification 4-hydroxyproline.

In terms of tissue distribution, expressed by the venom duct.

Its subcellular location is the secreted. The polypeptide is Conotoxin reg3k (Conus regius (Crown cone)).